The following is a 362-amino-acid chain: Abnormal cell migration protein 13 (362 aa).

An N-terminal signal peptide occupies residues 1-20; the sequence is MTKLLIALILFSICWKPYSA. The Extracellular portion of the chain corresponds to 21–237; the sequence is EPIASFFDGL…ELDPLTTVSG (217 aa). Cystine bridges form between C36–C68 and C98–C136. The CUB domain occupies 36 to 175; it reads CKARLDRRLT…KGFKLHWGSF (140 aa). N-linked (GlcNAc...) asparagine glycosylation occurs at N63. N145 and N161 each carry an N-linked (GlcNAc...) asparagine glycan. An LDL-receptor class A domain is found at 182–225; that stretch reads NCVTGEFSCGNGECIPIESACDRFADCSNGEDLIHSRQMAANCQ. 3 cysteine pairs are disulfide-bonded: C183–C195, C190–C208, and C202–C224. The helical transmembrane segment at 238-258 threads the bilayer; the sequence is VFVLLFSATIILSLCGFIMFV. The Cytoplasmic portion of the chain corresponds to 259–362; it reads CCLCKCLKST…VRNDVHRNLL (104 aa). The interval 275-311 is disordered; sequence SSHTTTTTATDYKPDPPQFYPPSPPKMPPPSAASSYT. The span at 289–305 shows a compositional bias: pro residues; that stretch reads DPPQFYPPSPPKMPPPS.

As to quaternary structure, interacts with abl-1 (via SH2 and SH3 domains); the interaction is direct. Interacts with sem-5; the interaction is direct. In terms of tissue distribution, expressed in pharyngeal-intestinal valve cells and ventral cord neurons.

It is found in the cell membrane. It localises to the perikaryon. Its subcellular location is the cell projection. The protein resides in the axon. The protein localises to the dendrite. Its function is as follows. Probable receptor that acts as an upstream signaling protein to promote the guidance, migration and positioning of the right Q neuroblast (QR) and its descendants along the anteroposterior body axis, and also the anterior migration of BDU interneurons during larval development. Associates with and recruits the downstream components tyrosine kinase abl-1 and the tyrosine kinase adapter protein sem-5 to the leading edge of migrating Q neuroblasts and their descendants to activate signaling through the two parallel wve-1 and wsp-1 pathways, respectively, and direct migration along the anteroposterior body axis. Involved in cytoskeleton dynamics regulating the organization of the actin cytoskeleton at the leading edge of migrating cells to ensure correct Q cell polarity and promote migration. Role in cytoskeleton organization may be by activation of the wve-1 and wsp-1 pathways which recruit the Arp2/3 complex to the leading edge of migrating cells. Plays a role in regulating the asymmetric distribution of the actin cytoskeleton-binding protein cor-1 in Q neuroblasts which is required for the anterior migration of QR neuroblasts. The polypeptide is Abnormal cell migration protein 13 (Caenorhabditis elegans).